The chain runs to 482 residues: Proline--tRNA ligase (482 aa).

Positions 117, 119, and 148 each coordinate L-proline. Residues R148, E150, Q232, and T235 each contribute to the ATP site. Residue H237 participates in L-proline binding. S269 contacts ATP. The interaction with tRNA stretch occupies residues 346-376 (EMRGVPLRVEIGPRDLEKGAAVISRRDTGEK). Residues C436, C441, C464, and C467 each contribute to the Zn(2+) site.

Belongs to the class-II aminoacyl-tRNA synthetase family. ProS type 3 subfamily. As to quaternary structure, homodimer. The dimer is functionally asymmetric: only one of the two active sites at a time is able to form prolyl-adenylate, and only one tRNA molecule binds per dimer. Interacts with LeuRS, which enhances tRNA(Pro) aminoacylation.

The protein localises to the cytoplasm. It catalyses the reaction tRNA(Pro) + L-proline + ATP = L-prolyl-tRNA(Pro) + AMP + diphosphate. Catalyzes the attachment of proline to tRNA(Pro) in a two-step reaction: proline is first activated by ATP to form Pro-AMP and then transferred to the acceptor end of tRNA(Pro). Can inadvertently accommodate and process cysteine. This chain is Proline--tRNA ligase (proS), found in Methanothermobacter thermautotrophicus (strain ATCC 29096 / DSM 1053 / JCM 10044 / NBRC 100330 / Delta H) (Methanobacterium thermoautotrophicum).